The chain runs to 131 residues: Small ribosomal subunit protein uS11 (131 aa).

Belongs to the universal ribosomal protein uS11 family. Part of the 30S ribosomal subunit. Interacts with proteins S7 and S18. Binds to IF-3.

Located on the platform of the 30S subunit, it bridges several disparate RNA helices of the 16S rRNA. Forms part of the Shine-Dalgarno cleft in the 70S ribosome. In Deinococcus deserti (strain DSM 17065 / CIP 109153 / LMG 22923 / VCD115), this protein is Small ribosomal subunit protein uS11.